Consider the following 389-residue polypeptide: Putative phosphoserine aminotransferase (389 aa).

Arg45 contacts L-glutamate. Pyridoxal 5'-phosphate-binding positions include 79-80 (GT), Trp114, Thr169, Asp191, and Gln214. Lys215 bears the N6-(pyridoxal phosphate)lysine mark. 265-266 (NT) provides a ligand contact to pyridoxal 5'-phosphate.

The protein belongs to the class-V pyridoxal-phosphate-dependent aminotransferase family. SerC subfamily. Homodimer. The cofactor is pyridoxal 5'-phosphate.

It catalyses the reaction O-phospho-L-serine + 2-oxoglutarate = 3-phosphooxypyruvate + L-glutamate. It carries out the reaction 4-(phosphooxy)-L-threonine + 2-oxoglutarate = (R)-3-hydroxy-2-oxo-4-phosphooxybutanoate + L-glutamate. It participates in amino-acid biosynthesis; L-serine biosynthesis; L-serine from 3-phospho-D-glycerate: step 2/3. The protein operates within cofactor biosynthesis; pyridoxine 5'-phosphate biosynthesis; pyridoxine 5'-phosphate from D-erythrose 4-phosphate: step 3/5. Catalyzes the reversible conversion of 3-phosphohydroxypyruvate to phosphoserine and of 3-hydroxy-2-oxo-4-phosphonooxybutanoate to phosphohydroxythreonine. The protein is Putative phosphoserine aminotransferase of Schizosaccharomyces pombe (strain 972 / ATCC 24843) (Fission yeast).